We begin with the raw amino-acid sequence, 186 residues long: Outer-membrane lipoprotein LolB (186 aa).

The signal sequence occupies residues 1 to 16 (MRRLAVIASLAWALGG). Residue Cys-17 is the site of N-palmitoyl cysteine attachment. Cys-17 carries S-diacylglycerol cysteine lipidation.

This sequence belongs to the LolB family. Monomer.

It localises to the cell outer membrane. Functionally, plays a critical role in the incorporation of lipoproteins in the outer membrane after they are released by the LolA protein. The chain is Outer-membrane lipoprotein LolB from Thiobacillus denitrificans (strain ATCC 25259 / T1).